Consider the following 600-residue polypeptide: Aspartate--tRNA(Asp/Asn) ligase (600 aa).

An L-aspartate-binding site is contributed by Glu-174. The aspartate stretch occupies residues 198-201 (QLFK). L-aspartate is bound at residue Arg-220. ATP contacts are provided by residues 220-222 (RDE) and Gln-229. Residue His-457 coordinates L-aspartate. Glu-491 is an ATP binding site. Arg-498 contacts L-aspartate. ATP is bound at residue 543-546 (GLDR).

It belongs to the class-II aminoacyl-tRNA synthetase family. Type 1 subfamily. In terms of assembly, homodimer.

Its subcellular location is the cytoplasm. The catalysed reaction is tRNA(Asx) + L-aspartate + ATP = L-aspartyl-tRNA(Asx) + AMP + diphosphate. Aspartyl-tRNA synthetase with relaxed tRNA specificity since it is able to aspartylate not only its cognate tRNA(Asp) but also tRNA(Asn). Reaction proceeds in two steps: L-aspartate is first activated by ATP to form Asp-AMP and then transferred to the acceptor end of tRNA(Asp/Asn). The sequence is that of Aspartate--tRNA(Asp/Asn) ligase from Burkholderia multivorans (strain ATCC 17616 / 249).